The primary structure comprises 260 residues: Uroplakin-1b (260 aa).

The Cytoplasmic portion of the chain corresponds to 1–15 (MAKDDSTVRCFQGLL). The helical transmembrane segment at 16–36 (IFGHVIVGMCGIALTAECIFF) threads the bilayer. Topologically, residues 37–59 (VSDQHSLYPLLEATNNDDIFGAA) are extracellular. Residues 60 to 80 (WIGMFVGICLFCLSVLAIVGI) form a helical membrane-spanning segment. Residues 81 to 86 (MKSNRK) are Cytoplasmic-facing. Residues 87–107 (ILLAYFIMMFIVYGFEVASCI) form a helical membrane-spanning segment. Residues 108–229 (TAATQRDFFT…ELISGPMDRH (122 aa)) lie on the Extracellular side of the membrane. A helical transmembrane segment spans residues 230–250 (AWGVAWFGFAILCWTFWVLLG). Residues 251 to 260 (TMFYWSRIEY) are Cytoplasmic-facing.

This sequence belongs to the tetraspanin (TM4SF) family. In terms of assembly, heterodimer with uroplakin-3A (UPK3A) or uroplakin-3B (UPK3B). In terms of processing, N-glycosylated with high-mannose oligosaccharides.

Its subcellular location is the membrane. Component of the asymmetric unit membrane (AUM); a highly specialized biomembrane elaborated by terminally differentiated urothelial cells. May play an important role in normal bladder epithelial physiology, possibly in regulating membrane permeability of superficial umbrella cells or in stabilizing the apical membrane through AUM/cytoskeletal interactions. In Rattus norvegicus (Rat), this protein is Uroplakin-1b (Upk1b).